The following is a 156-amino-acid chain: MSRRHKAEKREINPDPKFGDLVVTKFMNAIMLDGKKSVAENIVYGAFDVVQGKAKQEPLTVFHSALENIAPHVEVRSRRVGGATYQVPVDVRPERRQALAIRWLIAAARKRNETTMVDRLSGELLDASNNRGSAVKKREDTHKMADANRAFSHYRW.

The protein belongs to the universal ribosomal protein uS7 family. In terms of assembly, part of the 30S ribosomal subunit. Contacts proteins S9 and S11.

Functionally, one of the primary rRNA binding proteins, it binds directly to 16S rRNA where it nucleates assembly of the head domain of the 30S subunit. Is located at the subunit interface close to the decoding center, probably blocks exit of the E-site tRNA. This is Small ribosomal subunit protein uS7 from Rhizobium johnstonii (strain DSM 114642 / LMG 32736 / 3841) (Rhizobium leguminosarum bv. viciae).